The primary structure comprises 550 residues: Methionine--tRNA ligase (550 aa).

The 'HIGH' region signature appears at 13-23; the sequence is PYANGPLHFGH. Cys-145, Cys-148, Cys-158, and Cys-161 together coordinate Zn(2+). Residues 331-335 carry the 'KMSKS' region motif; that stretch reads QFSKS. Lys-334 serves as a coordination point for ATP.

Belongs to the class-I aminoacyl-tRNA synthetase family. MetG type 1 subfamily. In terms of assembly, monomer. Requires Zn(2+) as cofactor.

It localises to the cytoplasm. It catalyses the reaction tRNA(Met) + L-methionine + ATP = L-methionyl-tRNA(Met) + AMP + diphosphate. Is required not only for elongation of protein synthesis but also for the initiation of all mRNA translation through initiator tRNA(fMet) aminoacylation. In Chlamydia trachomatis serovar L2b (strain UCH-1/proctitis), this protein is Methionine--tRNA ligase.